A 174-amino-acid polypeptide reads, in one-letter code: ATP synthase subunit delta (174 aa).

The protein belongs to the ATPase delta chain family. In terms of assembly, F-type ATPases have 2 components, F(1) - the catalytic core - and F(0) - the membrane proton channel. F(1) has five subunits: alpha(3), beta(3), gamma(1), delta(1), epsilon(1). F(0) has three main subunits: a(1), b(2) and c(10-14). The alpha and beta chains form an alternating ring which encloses part of the gamma chain. F(1) is attached to F(0) by a central stalk formed by the gamma and epsilon chains, while a peripheral stalk is formed by the delta and b chains.

The protein resides in the cell inner membrane. F(1)F(0) ATP synthase produces ATP from ADP in the presence of a proton or sodium gradient. F-type ATPases consist of two structural domains, F(1) containing the extramembraneous catalytic core and F(0) containing the membrane proton channel, linked together by a central stalk and a peripheral stalk. During catalysis, ATP synthesis in the catalytic domain of F(1) is coupled via a rotary mechanism of the central stalk subunits to proton translocation. Its function is as follows. This protein is part of the stalk that links CF(0) to CF(1). It either transmits conformational changes from CF(0) to CF(1) or is implicated in proton conduction. The sequence is that of ATP synthase subunit delta from Francisella philomiragia subsp. philomiragia (strain ATCC 25017 / CCUG 19701 / FSC 153 / O#319-036).